The sequence spans 208 residues: Thiamine-phosphate synthase (208 aa).

Residues 36 to 40 (QLRMK) and D68 contribute to the 4-amino-2-methyl-5-(diphosphooxymethyl)pyrimidine site. Residues D69 and D88 each contribute to the Mg(2+) site. T107 is a binding site for 4-amino-2-methyl-5-(diphosphooxymethyl)pyrimidine. 133 to 135 (TTT) is a 2-[(2R,5Z)-2-carboxy-4-methylthiazol-5(2H)-ylidene]ethyl phosphate binding site. 4-amino-2-methyl-5-(diphosphooxymethyl)pyrimidine is bound at residue K136. Position 169 (G169) interacts with 2-[(2R,5Z)-2-carboxy-4-methylthiazol-5(2H)-ylidene]ethyl phosphate.

Belongs to the thiamine-phosphate synthase family. Mg(2+) serves as cofactor.

It carries out the reaction 2-[(2R,5Z)-2-carboxy-4-methylthiazol-5(2H)-ylidene]ethyl phosphate + 4-amino-2-methyl-5-(diphosphooxymethyl)pyrimidine + 2 H(+) = thiamine phosphate + CO2 + diphosphate. It catalyses the reaction 2-(2-carboxy-4-methylthiazol-5-yl)ethyl phosphate + 4-amino-2-methyl-5-(diphosphooxymethyl)pyrimidine + 2 H(+) = thiamine phosphate + CO2 + diphosphate. The enzyme catalyses 4-methyl-5-(2-phosphooxyethyl)-thiazole + 4-amino-2-methyl-5-(diphosphooxymethyl)pyrimidine + H(+) = thiamine phosphate + diphosphate. It participates in cofactor biosynthesis; thiamine diphosphate biosynthesis; thiamine phosphate from 4-amino-2-methyl-5-diphosphomethylpyrimidine and 4-methyl-5-(2-phosphoethyl)-thiazole: step 1/1. In terms of biological role, condenses 4-methyl-5-(beta-hydroxyethyl)thiazole monophosphate (THZ-P) and 2-methyl-4-amino-5-hydroxymethyl pyrimidine pyrophosphate (HMP-PP) to form thiamine monophosphate (TMP). The sequence is that of Thiamine-phosphate synthase from Phocaeicola vulgatus (strain ATCC 8482 / DSM 1447 / JCM 5826 / CCUG 4940 / NBRC 14291 / NCTC 11154) (Bacteroides vulgatus).